A 94-amino-acid polypeptide reads, in one-letter code: MTINYQFGDVDAHGAMIRAQAGLLEAEHQAIVRDVLAAGDFWGGAGSVACQEFITQLGRNFQVIYEQANAHGQKVQAAGNNMAQTDSAVGSSWA.

It belongs to the WXG100 family. ESAT-6 subfamily. As to quaternary structure, forms a complex with EsxP.

Its subcellular location is the secreted. In Mycobacterium tuberculosis (strain CDC 1551 / Oshkosh), this protein is ESAT-6-like protein EsxO.